Here is a 301-residue protein sequence, read N- to C-terminus: Homeobox protein Nkx-2.6 (301 aa).

A disordered region spans residues 22-135 (ERSCPAASPH…QPKARQRRKP (114 aa)). Residues 132-191 (RRKPRVLFSQAQVLALERRFKQQRYLSAPEREHLASALQLTSTQVKIWFQNRRYKCKRQR) constitute a DNA-binding region (homeobox).

This sequence belongs to the NK-2 homeobox family.

Its subcellular location is the nucleus. Acts as a transcriptional activator. In conjunction with NKX2-5, may play a role in both pharyngeal and cardiac embryonic development. The chain is Homeobox protein Nkx-2.6 (NKX2-6) from Homo sapiens (Human).